A 148-amino-acid polypeptide reads, in one-letter code: Hemoglobin subunit beta (148 aa).

In terms of domain architecture, Globin spans 3 to 148 (DWTDAERSAI…VVSALGRQYH (146 aa)). Heme b-binding residues include His64 and His93.

Belongs to the globin family. Heterotetramer of two alpha chains and two beta chains. Red blood cells.

Involved in oxygen transport from gills to the various peripheral tissues. The polypeptide is Hemoglobin subunit beta (hbb) (Salmo salar (Atlantic salmon)).